Reading from the N-terminus, the 411-residue chain is Glucose-1-phosphate adenylyltransferase (411 aa).

Alpha-D-glucose 1-phosphate is bound by residues glycine 161, 176–177 (EK), and serine 195.

The protein belongs to the bacterial/plant glucose-1-phosphate adenylyltransferase family. In terms of assembly, homotetramer.

The catalysed reaction is alpha-D-glucose 1-phosphate + ATP + H(+) = ADP-alpha-D-glucose + diphosphate. Its pathway is glycan biosynthesis; glycogen biosynthesis. Functionally, involved in the biosynthesis of ADP-glucose, a building block required for the elongation reactions to produce glycogen. Catalyzes the reaction between ATP and alpha-D-glucose 1-phosphate (G1P) to produce pyrophosphate and ADP-Glc. This chain is Glucose-1-phosphate adenylyltransferase, found in Anaeromyxobacter sp. (strain Fw109-5).